Here is a 412-residue protein sequence, read N- to C-terminus: Subtilisin-like protease 6 (412 aa).

The first 20 residues, 1–20, serve as a signal peptide directing secretion; that stretch reads MGFITKAIPIVLAALSTVNG. Positions 21-127 are excised as a propeptide; it reads ARILEAGPHA…VRATTNGTNL (107 aa). An Inhibitor I9 domain is found at 36–120; the sequence is KYIVVMKKDV…FIEPDFVVRA (85 aa). Positions 135-412 constitute a Peptidase S8 domain; sequence SWGLARVSTR…SKLIYNGSGK (278 aa). Residues aspartate 167 and histidine 198 each act as charge relay system in the active site. N-linked (GlcNAc...) asparagine glycans are attached at residues asparagine 252, asparagine 264, and asparagine 325. The active-site Charge relay system is serine 358. Asparagine 408 is a glycosylation site (N-linked (GlcNAc...) asparagine).

Belongs to the peptidase S8 family.

It is found in the secreted. In terms of biological role, secreted subtilisin-like serine protease with keratinolytic activity that contributes to pathogenicity. The sequence is that of Subtilisin-like protease 6 (SUB6) from Trichophyton verrucosum (strain HKI 0517).